Here is a 1386-residue protein sequence, read N- to C-terminus: Lysophospholipase NTE1 (1386 aa).

Residues 1 to 19 (MGPEFEDSIPLVHSDNRTT) are Cytoplasmic-facing. A helical transmembrane segment spans residues 20–40 (TIYSVYIIISDIFSFVQWLLF). Topologically, residues 41–65 (KVLNLIIIDSPAFVLRLLSKNFEIN) are lumenal. The chain crosses the membrane as a helical span at residues 66–86 (LHLSSILATLIGVSVVTYLVI). The Cytoplasmic portion of the chain corresponds to 87-1386 (RYKFLTGYSH…KKILYRRNSI (1300 aa)). The tract at residues 394-416 (EAEAENLPKKLKHHHRNQLQRTT) is disordered. The span at 402-411 (KKLKHHHRNQ) shows a compositional bias: basic residues. Residues 577–701 (KRLL…LKNL) and 697–821 (KLKN…VASK) contribute to the a nucleoside 3',5'-cyclic phosphate site. The PNPLA domain occupies 1081 to 1245 (LVLGGGGSRG…LDNLPVNEMK (165 aa)). The short motif at 1085-1090 (GGGSRG) is the GXGXXG element. Residues 1112–1116 (GTSIG) carry the GXSXG motif. Ser1114 serves as the catalytic Nucleophile. Asp1232 serves as the catalytic Proton acceptor. Positions 1232–1234 (DGG) match the DGA/G motif.

Belongs to the NTE family.

It is found in the endoplasmic reticulum membrane. The catalysed reaction is a 1-acyl-sn-glycero-3-phosphocholine + H2O = sn-glycerol 3-phosphocholine + a fatty acid + H(+). With respect to regulation, inhibited by organophosphorus esters. Functionally, intracellular phospholipase B that catalyzes the double deacylation of phosphatidylcholine (PC) to glycerophosphocholine (GroPCho). Plays an important role in membrane lipid homeostasis. Responsible for the rapid PC turnover in response to inositol, elevated temperatures, or when choline is present in the growth medium. This Candida albicans (strain SC5314 / ATCC MYA-2876) (Yeast) protein is Lysophospholipase NTE1 (NTE1).